An 887-amino-acid chain; its full sequence is Collagen alpha-2(I) chain (887 aa).

Low complexity predominate over residues 1 to 42 (GPMGIMGPRGPPGASGAPGPQGFQGPPGEPGEPGQTGPAGAR). Positions 1–887 (GPMGIMGPRG…PGPPGPPGPS (887 aa)) are disordered. Positions 51-65 (AGEDGHPGKPGRSGE) are enriched in basic and acidic residues. Low complexity-rich tracts occupy residues 126-155 (VGAPGPAGARGSDGSVGPVGPAGPIGSAGP), 170-194 (PVGSPGASGPAGPRGEVGIPGVSGP), 221-236 (PGPVGAAGATGARGIV), 278-290 (IRGSPGSRGIPGA), 368-388 (AGIAGARGAPGPDGNNGAQGP), 444-455 (PGESGAAGPTGP), and 473-503 (EPGVVGAPGTAGPSGPSGIPGERGAAGIPGP). A compositionally biased stretch (basic and acidic residues) spans 504–517 (KGEKGEPGIRRDGA). 6 stretches are compositionally biased toward low complexity: residues 518-533 (RGAPGAVGAPGPAGAN), 560-580 (VGPAGPNGFAGPAGAAGQPGA), 595-605 (ATGFPGAAGRT), 658-673 (PGPQGIIGAPGFIGIP), 690-720 (EPGPIGIAGPPGARGPPGAVGNPGVNGAPGE), and 766-782 (EPGPAGVVGPTGAVGPR). A compositionally biased stretch (basic and acidic residues) spans 791–802 (RGDKGEPGDKGP). Residues 872 to 887 (AGPPGPPGPPGPPGPS) are compositionally biased toward pro residues.

It belongs to the fibrillar collagen family. Trimers of one alpha 2(I) and two alpha 1(I) chains. Interacts (via C-terminus) with TMEM131 (via PapD-L domain); the interaction is direct and is involved in assembly and TRAPPIII ER-to-Golgi transport complex-dependent secretion of collagen. Post-translationally, prolines at the third position of the tripeptide repeating unit (G-X-Y) are hydroxylated in some or all of the chains. Forms the fibrils of tendon, ligaments and bones. In bones, the fibrils are mineralized with calcium hydroxyapatite.

It is found in the secreted. Its subcellular location is the extracellular space. It localises to the extracellular matrix. Type I collagen is a member of group I collagen (fibrillar forming collagen). The polypeptide is Collagen alpha-2(I) chain (Hippopotamus amphibius (Hippopotamus)).